A 240-amino-acid chain; its full sequence is Nuclear receptor-interacting protein 3 (240 aa).

The protein is Nuclear receptor-interacting protein 3 (NRIP3) of Pongo abelii (Sumatran orangutan).